Reading from the N-terminus, the 280-residue chain is 3-methyl-2-oxobutanoate hydroxymethyltransferase (280 aa).

Aspartate 45 and aspartate 84 together coordinate Mg(2+). 3-methyl-2-oxobutanoate contacts are provided by residues aspartate 45 to serine 46, aspartate 84, and lysine 114. Glutamate 116 serves as a coordination point for Mg(2+). The active-site Proton acceptor is the glutamate 183.

Belongs to the PanB family. Homodecamer; pentamer of dimers. The cofactor is Mg(2+).

The protein localises to the cytoplasm. It carries out the reaction 3-methyl-2-oxobutanoate + (6R)-5,10-methylene-5,6,7,8-tetrahydrofolate + H2O = 2-dehydropantoate + (6S)-5,6,7,8-tetrahydrofolate. Its pathway is cofactor biosynthesis; (R)-pantothenate biosynthesis; (R)-pantoate from 3-methyl-2-oxobutanoate: step 1/2. Its function is as follows. Catalyzes the reversible reaction in which hydroxymethyl group from 5,10-methylenetetrahydrofolate is transferred onto alpha-ketoisovalerate to form ketopantoate. This chain is 3-methyl-2-oxobutanoate hydroxymethyltransferase, found in Clostridium kluyveri (strain ATCC 8527 / DSM 555 / NBRC 12016 / NCIMB 10680 / K1).